Reading from the N-terminus, the 452-residue chain is MQLQFLGTLASSEKRKKSQRLFFKNIKSTKNKAGKASIMSSDTNVNKSASPTATAEEQPVEPDGPLPGSDNNQEKKVRLSPAKMSTKNSTDLVEYVDKSHAFLPIIPNTQRGQLEDRLNNQARTIAFLLEQAFRIKEDISACLQGTHGFRKEESLARKLLESHIQTITSIVKKLSQNIEILEDQIRARDQAATGTNFAVHEINIKHLQGVGDLRGRVARCDSSIVKLSGDIHLFRQEHRQIEKAIQEFVPALETLSKNLDMKVMQLLGKIETASSEQTSNLKMVQGDYRHEMNLLEFKFHSLSSNLYEEVENNKKWTENQFLKYRKDHLGHINECLKVLQEKLEKSENKMEEKLLQLSSKVENFINTQKQETQLSKVKHMENKLSKKMEQMEKQIWGELETMQNEYQSGFKSIHDSLSSLQQIQKTKMDLEKYKVQKDLKKLQRKIVELQEV.

Polar residues-rich tracts occupy residues Met-1–Ser-11 and Ile-38–Ala-55. The disordered stretch occupies residues Met-1 to Ser-85. Coiled coils occupy residues Ile-164–Ala-192 and Leu-329–Val-452.

It belongs to the FAM81 family.

In Homo sapiens (Human), this protein is Protein FAM81B (FAM81B).